The chain runs to 354 residues: Phosphate acyltransferase (354 aa).

Belongs to the PlsX family. In terms of assembly, homodimer. Probably interacts with PlsY.

The protein localises to the cytoplasm. The catalysed reaction is a fatty acyl-[ACP] + phosphate = an acyl phosphate + holo-[ACP]. The protein operates within lipid metabolism; phospholipid metabolism. Catalyzes the reversible formation of acyl-phosphate (acyl-PO(4)) from acyl-[acyl-carrier-protein] (acyl-ACP). This enzyme utilizes acyl-ACP as fatty acyl donor, but not acyl-CoA. This is Phosphate acyltransferase from Ralstonia nicotianae (strain ATCC BAA-1114 / GMI1000) (Ralstonia solanacearum).